A 427-amino-acid chain; its full sequence is Arginine biosynthesis bifunctional protein ArgJ (427 aa).

Residues Thr-174, Lys-200, Thr-211, Glu-291, Asn-422, and Thr-427 each coordinate substrate. The active-site Nucleophile is Thr-211.

This sequence belongs to the ArgJ family. As to quaternary structure, heterotetramer of two alpha and two beta chains.

The protein resides in the cytoplasm. The catalysed reaction is N(2)-acetyl-L-ornithine + L-glutamate = N-acetyl-L-glutamate + L-ornithine. It carries out the reaction L-glutamate + acetyl-CoA = N-acetyl-L-glutamate + CoA + H(+). It functions in the pathway amino-acid biosynthesis; L-arginine biosynthesis; L-ornithine and N-acetyl-L-glutamate from L-glutamate and N(2)-acetyl-L-ornithine (cyclic): step 1/1. Its pathway is amino-acid biosynthesis; L-arginine biosynthesis; N(2)-acetyl-L-ornithine from L-glutamate: step 1/4. Catalyzes two activities which are involved in the cyclic version of arginine biosynthesis: the synthesis of N-acetylglutamate from glutamate and acetyl-CoA as the acetyl donor, and of ornithine by transacetylation between N(2)-acetylornithine and glutamate. The chain is Arginine biosynthesis bifunctional protein ArgJ from Prochlorococcus marinus (strain MIT 9313).